A 201-amino-acid polypeptide reads, in one-letter code: MYTLLSGLYKYMFQKDEYCILILGLDNAGKTTFLEQSKTRFNKNYKGMSLSKITTTVGLNIGTVDVGKARLMFWDLGGQEELQSLWDKYYAECHGVIYVIDSTDEERLSESKEAFEKVVSSEALDGVPILVLANKQDVETCLSIPDIKTAFSDCTCKIGRRDCLTQACSALTGKGVREGIEWMVKCVVRNVHRPPRQRDIT.

At Met1 the chain carries N-acetylmethionine. Residues 24–31, 75–79, and 134–137 each bind GTP; these read GLDNAGKT, DLGGQ, and NKQD.

This sequence belongs to the small GTPase superfamily. Arf family. In terms of assembly, interacts with SYS1.

The protein resides in the golgi apparatus. It localises to the trans-Golgi network. Trans-Golgi-associated GTPase that regulates protein sorting. Controls the targeting of ARL1 and its effector to the trans-Golgi. Required for the lipidation of chylomicrons in the intestine and required for VLDL lipidation in the liver. The chain is ADP-ribosylation factor-related protein 1 (Arfrp1) from Mus musculus (Mouse).